Consider the following 285-residue polypeptide: Pantothenate synthetase (285 aa).

Residue 30–37 (MGNLHDGH) coordinates ATP. The Proton donor role is filled by H37. Q61 provides a ligand contact to (R)-pantoate. Q61 contributes to the beta-alanine binding site. 149–152 (GEKD) lines the ATP pocket. Residue Q155 participates in (R)-pantoate binding. ATP-binding positions include I178 and 186–189 (LSSR).

Belongs to the pantothenate synthetase family. As to quaternary structure, homodimer.

The protein resides in the cytoplasm. The catalysed reaction is (R)-pantoate + beta-alanine + ATP = (R)-pantothenate + AMP + diphosphate + H(+). Its pathway is cofactor biosynthesis; (R)-pantothenate biosynthesis; (R)-pantothenate from (R)-pantoate and beta-alanine: step 1/1. Functionally, catalyzes the condensation of pantoate with beta-alanine in an ATP-dependent reaction via a pantoyl-adenylate intermediate. This is Pantothenate synthetase from Buchnera aphidicola subsp. Acyrthosiphon pisum (strain Tuc7).